The primary structure comprises 921 residues: Probable TonB-dependent receptor NMB1497 (921 aa).

Residues 1-25 (MRSSFRLKPICFYLMGVTLYHYSYA) form the signal peptide. Residues 53–174 (DKKVFTDARA…LAGSANLRTL (122 aa)) form the TBDR plug domain. The TBDR beta-barrel domain occupies 185–921 (TYGLLLKGLT…TFLMTMSYKF (737 aa)). A TonB C-terminal box motif is present at residues 904-921 (LTNFARGRTFLMTMSYKF).

It belongs to the TonB-dependent receptor family.

The protein resides in the cell outer membrane. Functionally, probable receptor, TonB-dependent. This chain is Probable TonB-dependent receptor NMB1497, found in Neisseria meningitidis serogroup B (strain ATCC BAA-335 / MC58).